Reading from the N-terminus, the 146-residue chain is Ataxin-7-like protein 1 (146 aa).

Disordered stretches follow at residues 1–27 (MTSERSRIPCLSAAAAEGTGKKQQEGT) and 125–146 (KRNASISWSGAESRQALEQRQV). Positions 127–138 (NASISWSGAESR) are enriched in polar residues.

The sequence is that of Ataxin-7-like protein 1 (Atxn7l1) from Mus musculus (Mouse).